A 345-amino-acid polypeptide reads, in one-letter code: Centromere protein U (345 aa).

Basic residues-rich tracts occupy residues 1 to 10 (MSSKKRTKRN) and 19 to 29 (HKGRSHPRRKF). Disordered regions lie at residues 1-37 (MSSK…EPDV) and 64-153 (AVDA…SSVQ). Over residues 88–106 (NAERSEKMLLETPEGDVHE) the composition is skewed to basic and acidic residues. The span at 142-152 (SDSSVNSPSSV) shows a compositional bias: low complexity. Positions 201-294 (CSAFEDQVTD…QDYLDYREEN (94 aa)) form a coiled coil. The short motif at 222–239 (KKKNAKVVADIKKKRQRL) is the Nuclear localization signal element.

Belongs to the CENP-U/AME1 family. In terms of assembly, interacts with CENPH-CENPI complex at the kinetochore.

It is found in the nucleus. Its subcellular location is the chromosome. The protein localises to the centromere. In terms of biological role, probable component of a centromeric complex involved in assembly of kinetochore proteins, mitotic progression and chromosome segregation. Required for maintenance of sister chromatid adhesion during mitotic checkpoint activation. The protein is Centromere protein U (CENPU) of Gallus gallus (Chicken).